A 588-amino-acid polypeptide reads, in one-letter code: MNNSINHKFHHISRAEYQELLAVSRGDAVADYIIDNVSILDLINGGEISGPIVIKGRYIAGVGAEYTDAPALQRIDAHGATAVPGFIDAHLHIESSMMTPVTFETATLPRGLTTVICDPHEIVNVMGEAGFAWFARCAEQARQNQYLQVSSCVPALEGCDVNGASFTLEQMLAWRDHPQVTGLAEMMDYPGVISGQNALLDKLDAFRHLTLDGHCPGLGGKELNAYIAAGIENCHESYQLEEGRRKLQLGMSLMIREGSAARNLNALAPLINEFNSPQCMLCTDDRNPWEIAHEGHIDALIRRLIEQHNVPLHVAYRVASWSTARHFGLNHLGLLAPGKQADIVLLSDARKVTVQQVLVKGEPIDAQTLQAEESAKLAQSAPPYGNTIARQPVSASDFALQFTPGKRYRVIDVIHNELITHSHSSVYSENGFERNDVCFIAVLERYGQRLAPACGLLGGFGLNEGALAATVSHDSHNIVVIGRSAEEMALAVNQVIQDGGGLCVVRNGQVQSHLPLPIAGLMSTDTAQSLAEQIDALKAAARECGPLPDEPFIQMAFLSLPVIPALKLTSQGLFDGEKFAFTTLEVTE.

It belongs to the metallo-dependent hydrolases superfamily. Adenine deaminase family. In terms of assembly, homodimer. Mn(2+) is required as a cofactor.

The catalysed reaction is adenine + H2O + H(+) = hypoxanthine + NH4(+). This Escherichia coli O157:H7 (strain EC4115 / EHEC) protein is Adenine deaminase.